Reading from the N-terminus, the 256-residue chain is 5'-nucleotidase SurE (256 aa).

Positions 8, 9, 40, and 92 each coordinate a divalent metal cation.

It belongs to the SurE nucleotidase family. A divalent metal cation serves as cofactor.

It localises to the cytoplasm. The catalysed reaction is a ribonucleoside 5'-phosphate + H2O = a ribonucleoside + phosphate. In terms of biological role, nucleotidase that shows phosphatase activity on nucleoside 5'-monophosphates. The protein is 5'-nucleotidase SurE of Allorhizobium ampelinum (strain ATCC BAA-846 / DSM 112012 / S4) (Agrobacterium vitis (strain S4)).